A 379-amino-acid chain; its full sequence is Cytochrome b (379 aa).

Transmembrane regions (helical) follow at residues 34–54 (FGSLLGICLITQILTGLLLAT), 78–99 (WLIRNLHANGASFFFICIYLHI), 114–134 (WNIGIILLLTLMATAFVGYVL), and 179–199 (FFALHFLLPFLIVSLSIIHLT). Heme b is bound by residues His84 and His98. Positions 183 and 197 each coordinate heme b. His202 contributes to the a ubiquinone binding site. The next 4 helical transmembrane spans lie at 227–247 (TKDMLGFTLMFFPLLTLAFFF), 289–309 (LGGVLALTASVLILFLSPLLH), 321–341 (MSQLLFWLLIANLLILTWIGS), and 348–368 (FIIIGQVASFTYFFTLLFLFP).

This sequence belongs to the cytochrome b family. In terms of assembly, the cytochrome bc1 complex contains 11 subunits: 3 respiratory subunits (MT-CYB, CYC1 and UQCRFS1), 2 core proteins (UQCRC1 and UQCRC2) and 6 low-molecular weight proteins (UQCRH/QCR6, UQCRB/QCR7, UQCRQ/QCR8, UQCR10/QCR9, UQCR11/QCR10 and a cleavage product of UQCRFS1). This cytochrome bc1 complex then forms a dimer. Heme b serves as cofactor.

It localises to the mitochondrion inner membrane. Component of the ubiquinol-cytochrome c reductase complex (complex III or cytochrome b-c1 complex) that is part of the mitochondrial respiratory chain. The b-c1 complex mediates electron transfer from ubiquinol to cytochrome c. Contributes to the generation of a proton gradient across the mitochondrial membrane that is then used for ATP synthesis. This Tinamus major (Great tinamou) protein is Cytochrome b (MT-CYB).